A 220-amino-acid polypeptide reads, in one-letter code: Deoxyribose-phosphate aldolase (220 aa).

D89 acts as the Proton donor/acceptor in catalysis. K151 acts as the Schiff-base intermediate with acetaldehyde in catalysis. K180 (proton donor/acceptor) is an active-site residue.

The protein belongs to the DeoC/FbaB aldolase family. DeoC type 1 subfamily.

The protein resides in the cytoplasm. The catalysed reaction is 2-deoxy-D-ribose 5-phosphate = D-glyceraldehyde 3-phosphate + acetaldehyde. The protein operates within carbohydrate degradation; 2-deoxy-D-ribose 1-phosphate degradation; D-glyceraldehyde 3-phosphate and acetaldehyde from 2-deoxy-alpha-D-ribose 1-phosphate: step 2/2. Functionally, catalyzes a reversible aldol reaction between acetaldehyde and D-glyceraldehyde 3-phosphate to generate 2-deoxy-D-ribose 5-phosphate. The chain is Deoxyribose-phosphate aldolase from Streptococcus mutans serotype c (strain ATCC 700610 / UA159).